Reading from the N-terminus, the 457-residue chain is Equilibrative nucleoside transporter 1 (457 aa).

At 1-12 the chain is on the cytoplasmic side; that stretch reads MTTSHQPQDRYK. Residues 13-29 traverse the membrane as a helical segment; the sequence is AVWLIFFVLGLGTLLPW. Topologically, residues 30–82 are extracellular; it reads NFFITATQYFTSRLNTSQNISLVTNQSCESTEALADPSVSLPARSSLSAIFNN. 3 N-linked (GlcNAc...) asparagine glycosylation sites follow: Asn44, Asn48, and Asn54. The chain crosses the membrane as a helical span at residues 83-107; that stretch reads VMTLCAMLPLLIFTCLNSFLHQKVS. The Cytoplasmic portion of the chain corresponds to 108-111; that stretch reads QSLR. Residues 112–130 traverse the membrane as a helical segment; sequence ILGSLLAILLVFLVTATLV. At 131 to 138 the chain is on the extracellular side; that stretch reads KVQMDALS. The helical transmembrane segment at 139–157 threads the bilayer; it reads FFIITMIKIVLINSFGAIL. The Cytoplasmic segment spans residues 158-174; sequence QASLFGLAGVLPANYTA. A helical transmembrane segment spans residues 175–199; sequence PIMSGQGLAGFFTSVAMICAVASGS. Over 200–206 the chain is Extracellular; the sequence is KLSESAF. A helical transmembrane segment spans residues 207–227; sequence GYFITACAVVILAILCYLALP. The Cytoplasmic portion of the chain corresponds to 228–291; it reads WMEFYRHYLQ…IKAILKSIWV (64 aa). Phosphoserine is present on Ser254. Basic and acidic residues predominate over residues 255–266; the sequence is EGEEPRGGREES. Residues 255–275 are disordered; the sequence is EGEEPRGGREESGVPGPNSLP. Residue Ser273 is modified to Phosphoserine. Residues 292-311 traverse the membrane as a helical segment; the sequence is LALSVCFIFTVTIGLFPAVT. The Extracellular segment spans residues 312–323; that stretch reads AEVESSIAGTSP. A helical transmembrane segment spans residues 324 to 343; sequence WKNCYFIPVACFLNFNVFDW. At 344–360 the chain is on the cytoplasmic side; the sequence is LGRSLTAICMWPGQDSR. A helical membrane pass occupies residues 361 to 379; the sequence is WLPVLVACRVVFIPLLMLC. Residues 380 to 394 are Extracellular-facing; it reads NVKQHHYLPSLFKHD. A helical membrane pass occupies residues 395–414; it reads VWFITFMAAFAFSNGYLASL. Residues 415–432 lie on the Cytoplasmic side of the membrane; sequence CMCFGPKKVKPAEAETAG. Residues 433-453 form a helical membrane-spanning segment; that stretch reads NIMSFFLCLGLALGAVLSFLL. Topologically, residues 454 to 457 are extracellular; the sequence is RALV.

The protein belongs to the SLC29A/ENT transporter (TC 2.A.57) family. As to quaternary structure, identified in a complex with STOM. Expressed in jejunum, liver and lung. Expressed in testis at the blood-testis barrier (at protein level). Expressed in ventricular myocytes (at protein level). Expressed in kidney.

The protein resides in the basolateral cell membrane. The protein localises to the apical cell membrane. Its subcellular location is the cell membrane. The catalysed reaction is adenosine(in) = adenosine(out). It carries out the reaction guanosine(in) = guanosine(out). It catalyses the reaction inosine(in) = inosine(out). The enzyme catalyses uridine(out) = uridine(in). The catalysed reaction is thymidine(in) = thymidine(out). It carries out the reaction cytidine(in) = cytidine(out). It catalyses the reaction adenine(out) = adenine(in). The enzyme catalyses guanine(out) = guanine(in). The catalysed reaction is thymine(out) = thymine(in). It carries out the reaction uracil(in) = uracil(out). It catalyses the reaction hypoxanthine(out) = hypoxanthine(in). Its activity is regulated as follows. Transport activity is sensitive to low concentrations of the inhibitor nitrobenzylmercaptopurine riboside (NBMPR). Its function is as follows. Uniporter involved in the facilitative transport of nucleosides and nucleobases, and contributes to maintaining their cellular homeostasis. Functions as a Na(+)-independent transporter. Involved in the transport of nucleosides such as adenosine, thymidine and uridine. Also transports purine nucleobases (hypoxanthine, adenine, guanine) and pyrimidine nucleobases (thymine, uracil). Mediates basolateral nucleoside uptake into Sertoli cells, thereby regulating the transport of nucleosides in testis across the blood-testis barrier. Regulates inosine levels in brown adipocytes tissues (BAT) and extracellular inosine levels, which controls BAT-dependent energy expenditure. This chain is Equilibrative nucleoside transporter 1, found in Rattus norvegicus (Rat).